The following is a 498-amino-acid chain: N-succinylglutamate 5-semialdehyde dehydrogenase 1 (498 aa).

231 to 236 (GSSNTG) contributes to the NAD(+) binding site. Catalysis depends on residues glutamate 254 and cysteine 288.

Belongs to the aldehyde dehydrogenase family. AstD subfamily.

It catalyses the reaction N-succinyl-L-glutamate 5-semialdehyde + NAD(+) + H2O = N-succinyl-L-glutamate + NADH + 2 H(+). It participates in amino-acid degradation; L-arginine degradation via AST pathway; L-glutamate and succinate from L-arginine: step 4/5. Functionally, catalyzes the NAD-dependent reduction of succinylglutamate semialdehyde into succinylglutamate. The protein is N-succinylglutamate 5-semialdehyde dehydrogenase 1 of Shewanella denitrificans (strain OS217 / ATCC BAA-1090 / DSM 15013).